The following is a 537-amino-acid chain: MDCKVVSLNEKDQFIPKIKSSDPVITGLFQYDAAQQTSFEKRMSKENNGREAALANVIREYMSDLKLSSEQELNIQHLANGSKVVIGGQQAGLFGGPLYTFHKIFSIITLSKELTDTHKQQVVPVFWIAGEDHDFDEVNHTFVYNENHGSLHKVKYHTMEMPETTVSRYYPDKAELKQTLKTMFIHMKETVHTQGLLEICDRIIDQYDSWTDMFKALLHETFKAYGVLFIDAQFEPLRKMEAPMFKKILKKHQLLDDAFRATQQRTQNQGLNAMIQTDTNVHLFLHDENMRQLVSYDGKHFKLNKTDKTYIKEEIINIAENQPELFSNNVVTRPLMEEWLFNTVAFVGGPSEIKYWAELKDVFELFDVEMPIVMPRLRITYLNDRIEKLLSKYNIPLEKVLVDGVEGERSKFIREQASHQFIEKVEGMIEQQRRLNKDLLDEVAGNQNNINLVNKNNEIHIQQYDYLLKRYLLNIERENDISMKQFREIQETLHPMGGLQERIWNLLQILNDFGTDVFKPSTYPPLSYTFDHIIIKP.

The stretch at isoleucine 422–isoleucine 450 forms a coiled coil.

The protein belongs to the BshC family.

Its function is as follows. Involved in bacillithiol (BSH) biosynthesis. May catalyze the last step of the pathway, the addition of cysteine to glucosamine malate (GlcN-Mal) to generate BSH. This Staphylococcus aureus (strain COL) protein is Putative cysteine ligase BshC.